Consider the following 613-residue polypeptide: Autophagy-related protein 22-2 (613 aa).

The disordered stretch occupies residues 1-30 (MAFNSTPPVSPGGEAQQRPPRFPGEDTTPT). A helical transmembrane segment spans residues 41 to 61 (YGIAAEVFAVCGVGSFLPLTL). Residue N90 is glycosylated (N-linked (GlcNAc...) asparagine). 7 helical membrane passes run 120-140 (SFAMYTFSLAVLVQALTLISF), 167-187 (LFIFIAPPVYILASLLVVVGV), 189-209 (CLGSSFVVLNSFLPVLVANDP), 278-298 (VGLGYCAAVLVQILSILMLFA), 307-327 (ISGTLPLRFVLLLVGIWWFSF), 382-402 (VIIFLIAWFLLSDAMATVSGT), and 418-438 (VGLLSITATLSGMAGAFLWPV). Residue N448 is glycosylated (N-linked (GlcNAc...) asparagine). The next 4 helical transmembrane spans lie at 453–473 (LCIALFEVIPLYGMLAYIPLF), 477–497 (GVVGLQQPWEIFPLGIVHGLV), 508–528 (FFGLLIPPGSEAAFYALYAAT), and 553–573 (GFFFIAVLILLPIPLIWMVNA). Residues 592-613 (REHASEYGGPSEEAEGLLARDI) are disordered.

It belongs to the ATG22 family.

The protein localises to the vacuole membrane. Functionally, vacuolar effluxer which mediate the efflux of amino acids resulting from autophagic degradation. The release of autophagic amino acids allows the maintenance of protein synthesis and viability during nitrogen starvation. The sequence is that of Autophagy-related protein 22-2 (atg22-2) from Aspergillus fumigatus (strain ATCC MYA-4609 / CBS 101355 / FGSC A1100 / Af293) (Neosartorya fumigata).